We begin with the raw amino-acid sequence, 632 residues long: Chaperone protein HtpG (632 aa).

Residues 1-339 (MTQQTMSFQA…SSDLPLNVSR (339 aa)) are a; substrate-binding. The interval 340 to 559 (EILQESRDVK…DNDMSGYLQR (220 aa)) is b. The tract at residues 560–632 (MLKAAGQNAP…TNALLLSRAA (73 aa)) is c.

Belongs to the heat shock protein 90 family. Homodimer.

It localises to the cytoplasm. In terms of biological role, molecular chaperone. Has ATPase activity. This chain is Chaperone protein HtpG, found in Burkholderia thailandensis (strain ATCC 700388 / DSM 13276 / CCUG 48851 / CIP 106301 / E264).